Here is a 548-residue protein sequence, read N- to C-terminus: Thermosome subunit beta (548 aa).

This sequence belongs to the TCP-1 chaperonin family. In terms of assembly, forms a Heterooligomeric complex of two stacked eight-membered rings.

Functionally, molecular chaperone; binds unfolded polypeptides in vitro, and has a weak ATPase activity. In Aeropyrum pernix (strain ATCC 700893 / DSM 11879 / JCM 9820 / NBRC 100138 / K1), this protein is Thermosome subunit beta (thsB).